Reading from the N-terminus, the 486-residue chain is Serine/threonine-protein kinase 32C (486 aa).

Positions 1-56 are disordered; sequence MRSGAERRGSSAAASPGSPPPGRARPAGSDAPSALPPPAAGQPRARDSGDVRSQPR. Phosphoserine occurs at positions 10, 15, and 18. Residues 24 to 33 show a composition bias toward low complexity; sequence ARPAGSDAPS. Positions 93 to 353 constitute a Protein kinase domain; it reads FQILRAIGKG…LQDVQAAPAL (261 aa). ATP contacts are provided by residues 99–107 and Lys122; that span reads IGKGSFGKV. Asp216 (proton acceptor) is an active-site residue. Positions 396 to 405 are enriched in basic residues; the sequence is HKKKKRLAKN. Disordered regions lie at residues 396 to 419 and 444 to 486; these read HKKK…QSEN and SQDL…AGSG.

It belongs to the protein kinase superfamily. Ser/Thr protein kinase family. The cofactor is Mg(2+).

The enzyme catalyses L-seryl-[protein] + ATP = O-phospho-L-seryl-[protein] + ADP + H(+). The catalysed reaction is L-threonyl-[protein] + ATP = O-phospho-L-threonyl-[protein] + ADP + H(+). The sequence is that of Serine/threonine-protein kinase 32C from Homo sapiens (Human).